A 609-amino-acid chain; its full sequence is Pogo transposable element with KRAB domain (609 aa).

Disordered stretches follow at residues 1 to 28 and 100 to 127; these read MEST…ELED and EGEE…SDVK. Residues 8 to 28 adopt a coiled-coil conformation; sequence LNLSLKEEEEEEEIQSRELED. Lysine 13 participates in a covalent cross-link: Glycyl lysine isopeptide (Lys-Gly) (interchain with G-Cter in SUMO2). Positions 47–118 constitute a KRAB domain; sequence ALFDEVAIYF…DEWQLQGGTS (72 aa). Polar residues predominate over residues 108-119; sequence SDEWQLQGGTSA. Residues 250–323 enclose the HTH CENPB-type domain; sequence AFRGPKNGRF…MRRYDLSLRH (74 aa). The DDE-1 domain maps to 353 to 567; that stretch reads HDYEVAQMGN…ISSESIVQGF (215 aa). Residue lysine 384 forms a Glycyl lysine isopeptide (Lys-Gly) (interchain with G-Cter in SUMO2) linkage. The disordered stretch occupies residues 588–609; sequence SELPGGGEPPKDCDTESMAESN.

Its subcellular location is the nucleus. The chain is Pogo transposable element with KRAB domain (POGK) from Homo sapiens (Human).